Consider the following 288-residue polypeptide: Elongation factor Ts (288 aa).

Positions 79–82 are involved in Mg(2+) ion dislocation from EF-Tu; that stretch reads TDFV.

This sequence belongs to the EF-Ts family.

It is found in the cytoplasm. Functionally, associates with the EF-Tu.GDP complex and induces the exchange of GDP to GTP. It remains bound to the aminoacyl-tRNA.EF-Tu.GTP complex up to the GTP hydrolysis stage on the ribosome. The sequence is that of Elongation factor Ts from Ehrlichia ruminantium (strain Welgevonden).